The primary structure comprises 420 residues: Tryptophan synthase beta chain (420 aa).

N6-(pyridoxal phosphate)lysine is present on Lys-100.

The protein belongs to the TrpB family. Tetramer of two alpha and two beta chains. Pyridoxal 5'-phosphate serves as cofactor.

It catalyses the reaction (1S,2R)-1-C-(indol-3-yl)glycerol 3-phosphate + L-serine = D-glyceraldehyde 3-phosphate + L-tryptophan + H2O. Its pathway is amino-acid biosynthesis; L-tryptophan biosynthesis; L-tryptophan from chorismate: step 5/5. Its function is as follows. The beta subunit is responsible for the synthesis of L-tryptophan from indole and L-serine. The sequence is that of Tryptophan synthase beta chain from Pyrobaculum islandicum (strain DSM 4184 / JCM 9189 / GEO3).